The sequence spans 261 residues: Type III pantothenate kinase (261 aa).

Residue 6-13 (DVGNTNAK) participates in ATP binding. 108 to 111 (GADR) is a binding site for substrate. The active-site Proton acceptor is the Asp-110. Residue Thr-134 participates in ATP binding. Thr-188 lines the substrate pocket.

The protein belongs to the type III pantothenate kinase family. In terms of assembly, homodimer. Requires NH4(+) as cofactor. The cofactor is K(+).

It localises to the cytoplasm. The catalysed reaction is (R)-pantothenate + ATP = (R)-4'-phosphopantothenate + ADP + H(+). The protein operates within cofactor biosynthesis; coenzyme A biosynthesis; CoA from (R)-pantothenate: step 1/5. In terms of biological role, catalyzes the phosphorylation of pantothenate (Pan), the first step in CoA biosynthesis. The protein is Type III pantothenate kinase of Sphingopyxis alaskensis (strain DSM 13593 / LMG 18877 / RB2256) (Sphingomonas alaskensis).